Consider the following 258-residue polypeptide: Acetylglutamate kinase (258 aa).

Substrate-binding positions include 44-45 (GG), Arg-66, and Asn-158. ATP contacts are provided by residues 181 to 186 (DVSGIL) and 209 to 211 (IIT).

The protein belongs to the acetylglutamate kinase family. ArgB subfamily. Homodimer.

The protein resides in the cytoplasm. The enzyme catalyses N-acetyl-L-glutamate + ATP = N-acetyl-L-glutamyl 5-phosphate + ADP. Its pathway is amino-acid biosynthesis; L-arginine biosynthesis; N(2)-acetyl-L-ornithine from L-glutamate: step 2/4. Functionally, catalyzes the ATP-dependent phosphorylation of N-acetyl-L-glutamate. The protein is Acetylglutamate kinase of Salmonella arizonae (strain ATCC BAA-731 / CDC346-86 / RSK2980).